The chain runs to 509 residues: ATP synthase subunit beta (509 aa).

The interval 1-28 (MAKAATPKETAAAKKPAAPKKAASAKTA) is disordered. An ATP-binding site is contributed by 187-194 (GGAGVGKT).

This sequence belongs to the ATPase alpha/beta chains family. In terms of assembly, F-type ATPases have 2 components, CF(1) - the catalytic core - and CF(0) - the membrane proton channel. CF(1) has five subunits: alpha(3), beta(3), gamma(1), delta(1), epsilon(1). CF(0) has three main subunits: a(1), b(2) and c(9-12). The alpha and beta chains form an alternating ring which encloses part of the gamma chain. CF(1) is attached to CF(0) by a central stalk formed by the gamma and epsilon chains, while a peripheral stalk is formed by the delta and b chains.

It localises to the cell inner membrane. It catalyses the reaction ATP + H2O + 4 H(+)(in) = ADP + phosphate + 5 H(+)(out). Functionally, produces ATP from ADP in the presence of a proton gradient across the membrane. The catalytic sites are hosted primarily by the beta subunits. This chain is ATP synthase subunit beta, found in Sinorhizobium medicae (strain WSM419) (Ensifer medicae).